A 112-amino-acid polypeptide reads, in one-letter code: MSTFAEAPAGDLARGEKIFKTKCAQCHVAEKGGGHKQGPNLGGLFGRVSGTAAGFAYSKANKEAAVTWGESTLYEYLLNPKKYMPGNKMVFAGLKKPEERADLIAYLKQATA.

Cys-23, Cys-26, His-27, and Met-89 together coordinate heme c.

This sequence belongs to the cytochrome c family. In terms of processing, binds 1 heme c group covalently per subunit.

Its subcellular location is the mitochondrion intermembrane space. Electron carrier protein. The oxidized form of the cytochrome c heme group can accept an electron from the heme group of the cytochrome c1 subunit of cytochrome reductase. Cytochrome c then transfers this electron to the cytochrome oxidase complex, the final protein carrier in the mitochondrial electron-transport chain. In Chlamydomonas reinhardtii (Chlamydomonas smithii), this protein is Cytochrome c (CYC1).